The primary structure comprises 664 residues: Probable 3',5'-cyclic phosphodiesterase pde-1 (664 aa).

Disordered stretches follow at residues 24–60 (TSSASEEHGDSDKKLLSVQLITPRDEEEQTSSRSIKI) and 113–142 (RNQKEKSNSDDNCQEKEPTSPSSSRKKSYD). 2 stretches are compositionally biased toward basic and acidic residues: residues 28–38 (SEEHGDSDKKL) and 114–130 (NQKEKSNSDDNCQEKEP). The PDEase domain occupies 256–634 (VQCPIPPEIA…AHWKERAAKE (379 aa)). Catalysis depends on His333, which acts as the Proton donor. Positions 337, 373, 374, and 480 each coordinate a divalent metal cation. Disordered regions lie at residues 564-597 (DSLFPPSVDGGDDKSPSNALSPLPDLRNSSTSPS) and 630-664 (RAAKEEEERKIKEAAEAEAAAKQVEENKENGVTTN). Residues 630–644 (RAAKEEEERKIKEAA) are compositionally biased toward basic and acidic residues.

It belongs to the cyclic nucleotide phosphodiesterase family. As to quaternary structure, interacts with cmd-1 in the presence of Ca(2+). The cofactor is a divalent metal cation. As to expression, expressed in AFD thermosensory neurons.

The enzyme catalyses a nucleoside 3',5'-cyclic phosphate + H2O = a nucleoside 5'-phosphate + H(+). Redundantly with pde-5, plays a role in the AFD thermosensory neurons to regulate microvilli receptive ending morphology, possibly by regulating cGMP levels. This Caenorhabditis elegans protein is Probable 3',5'-cyclic phosphodiesterase pde-1 (pde-1).